The primary structure comprises 257 residues: uncharacterized protein (257 aa).

The signal sequence occupies residues Met1–Gly22. Cys23 carries N-palmitoyl cysteine lipidation. Cys23 is lipidated: S-diacylglycerol cysteine.

This sequence belongs to the staphylococcal tandem lipoprotein family.

It localises to the cell membrane. This is an uncharacterized protein from Staphylococcus aureus (strain N315).